The primary structure comprises 79 residues: UPF0154 protein SSP1415 (79 aa).

Residues 4–24 (WLAIVLIVLALILGLVGGFFL) traverse the membrane as a helical segment.

The protein belongs to the UPF0154 family.

Its subcellular location is the membrane. This Staphylococcus saprophyticus subsp. saprophyticus (strain ATCC 15305 / DSM 20229 / NCIMB 8711 / NCTC 7292 / S-41) protein is UPF0154 protein SSP1415.